Consider the following 342-residue polypeptide: DNA primase (342 aa).

Residues Cys37, Cys40, Cys65, and Cys68 each contribute to the Zn(2+) site.

Belongs to the Tequatrovirus DNA primase family. Monomer. Hexamer. Interacts with the DnaB-like replicative helicase; this interaction forms the active primosome complex, which is composed of 6 helicase and 1 primase subunits and expresses full helicase and primase activities. Interacts (via C-terminus) with the single-stranded DNA-binding protein. Part of the replicase complex that includes the DNA polymerase, the polymerase clamp, the clamp loader complex, the single-stranded DNA binding protein, the primase, the DnaB-like replicative helicase and the helicase assembly factor.

Synthesizes short RNA primers for the lagging strand DNA replication. The primase synthesizes short RNA primers on the lagging strand that the polymerase elongates using dNTPs. Recognizes two trinucleotide sequences 5'-GTT-3' and 5'-GCT-3' in vitro, but uses only the first as the priming site in vivo. This chain is DNA primase (61), found in Escherichia coli (Bacteriophage T4).